The following is a 345-amino-acid chain: Transcriptional activator hacA (345 aa).

The segment at 1 to 106 is disordered; sequence MSCDMEKTMS…AQTSRERKRL (106 aa). Positions 30-40 are enriched in polar residues; that stretch reads PADTSLNSADV. Composition is skewed to basic and acidic residues over residues 41-51 and 77-91; these read KTQEVKPEEKK and KTED…ERVL. The bZIP domain occupies 83–146; sequence EQRRIERVLR…NRLSQQLAQL (64 aa). The interval 85 to 138 is basic motif; that stretch reads RRIERVLRNRAAAQTSRERKRLEMEKLENEKIQMEQQNQFLLQRLSQMEAENNR. The segment at 139–146 is leucine-zipper; that stretch reads LSQQLAQL. The tract at residues 186-210 is disordered; it reads RIPFPTPSLSDYSPTLKPSTLAESS. Over residues 192 to 210 the composition is skewed to polar residues; it reads PSLSDYSPTLKPSTLAESS.

It belongs to the bZIP family. Homodimer.

The protein localises to the nucleus. In terms of biological role, transcriptional activator involved in the unfolded protein response (UPR) pathway. Recognizes and binds to the UPR element (UPRE) in the promoter of UPR-regulated genes. Increases the synthesis of endoplasmic reticulum-resident proteins required for protein folding as well as components of the secretory pathway. The polypeptide is Transcriptional activator hacA (hacA) (Aspergillus oryzae (strain ATCC 42149 / RIB 40) (Yellow koji mold)).